Consider the following 4249-residue polypeptide: MGHLWLSGTWFLFGLLWCAADSHKGSSETIPKVTEVIPKYGSINGATRLTIKGEGFSQASQFNYGADNTELGNHVQLVSSFQSITCDVEKDSSHSTQITCYTRAMPEDTYSVRVSVDGVPVAENNTCKGVASSWACSFSTKSFRTPTIRSITPLSGTPGTLITIKGRLFTDVYGSNTALSSNGRNVRILRIYIGGMPCELLIPHSDDLYGLKLDHANGDTGSVTCKTTGTYIGHHNVSFILDSDYGRSFPEKMTYFVSSLNKISMFQTYPEVVMVSPSKGSTEGGTLLTIHGHFFDQTDLPVRVLVGGQACAILNVTENTIYCKTPPKPHILKATYPGGRGLKVEVWNNSRPAHLEDILEYNEHTPGYMGATWTDSASYVWPIEQDTFVARISGFLVPPDSDVYRFYIRGDDRYAIYFSQTGRTEDKVRIAYYSGNANTYFSNSTQRSDEIHLQKGKEYYIEILLQEYTLSAFVDVGLYQYKNVFTEQQTGDALNEEQVIKSQSTVVPEVQIITLENWETADVTNEVQQVTVTSPCVGANSCSLSQYRFIYNMEKTVWLPADASDFTLKSALNDLWSIKPDSVQVTSKRDLQSYIYTITFVSTRGDFDLLGYEVFEGSNVTLSITEQTKGKPNLETFTLNWDGIASKPLTPESSEAEFQVAVEEMVSAKCPPEIAHLEEGFLVKYFRDYETDFELEHINRGQKTAETDAYCGRYSLKNPAVLFDSTDVKPNKSPYGDILLFPYNQLCLAYKGSLANFIDLKFKYQDSGKIIRSADVQFEYNFASGNKWTYTCIDLLDFLQTKYAGTSFSLQRITLQKSSEFQSIYVDAVYIGQTPTVSVLDDMPKRRPPALANKGIFLKHFQVNRTKLNGSAMTIQYSVTITSYNCSHNIPMMAVSFGQIITNETKNELVYRGNNWPGESKIRIQKIQEASPPISGSFDVQAYGHTLKGIPAAVPAADLQFALQSLEEIEQVSVNREGTCAGYSWSIRWTSPRGKQPLLQINDSNIIGEKANVTVTTIKEGGLFRQRIPGDMLRTLNQQPQVEVYVNGIPAKCSGDCGFTWDAMITPLILTTTPSEGSYAESTILTIAGSGFSPTSAVSVSVGSTRCSLLSVEENEIKCQILNGSAGHVPVAVSIADVGLAQNLEGEGSHFIYRSQISHVWPDSGSLAGGTLLTISGFGFSENSTVLVGNETCNVIEGDLNRITCRTSKRIEGTVDISVITNGIQVTAKDSFSYSCLQTPVVTDFSPKERTVLGKVNLTIKGYNFGNELAQNTVYVGRKHCQVLHSNFTDITCLLPTLPPGKHDIYVKVRNWGLASTRNKLNASILYILEVIHMFPQRGSLYGGTEITIMGFGFSTIPTENSVLLGSFPCDITSSSENVIKCTLHSTGTVFRITNNGSHLVHGLGYAWSPSVLNVTVGDTVVWSWQAHPFLRGIGYRIFSVSSPGSVTYDDKGFTNGRQKSASGSFSYQFTSPGIYYYSSGYVDEAHSISLQGVINVFPAEARHIPLYLFVGNIEATYVPAGPAHLQLASTAAGCLATEPLCGLNDTRVKHSNKLFFELSNCISPSIINITPSTGTANELITIIGHGFSSLPCANKVTIGSYPCVVEESSENSIICHIDPQNSMNVGIREIVTLIVYNLGTAINTLTKAFDRRFVLLPNIDMVMPKAGSTTGMTRVTIQGSGFMSSPEGVEVFMGDFPCKVLSVTYTAIECETSPAPQQLVLVDILIHGVPAQCQSNCSFSYLENIAPYVTGIFPNSIQGYGNVLIKGERFGTVLEEISIFIGSQQFRVIDVNENNITVLMTPLEAGLHSLSVVVGSKGLALGNLTISSPAVASVSPTSGSIAGGTTLMITGNGFSPGNTTVTVGDQPCQITFISSSEVYCSTPAGRAGTANLKISVNAIIYPPLSFTYAMEDTPFLKRIIPNRGLPGTEVEITGSNLGFAISDVSVMIKESVCNVTTVNDTVLQCTVGEHAGGIFPVTMLHKTKGSAVSSVAFEYPLSIQNIYPTQGSFGGGQTLTVTGMGFDPWNSTILVCNSECAVDKLRSNSTTLFCVIPPNNGKGHDQVCGVSVVNGKDSSHSTKLFTYTLSLTPLITEISPRRGSTAGGTRLTVTGSGFSENTQGVQVFVGNSKCDIQYSNKTHIVCMTSVHVPSGWVPVHVNIKNIGLAKLENADFLYADVWSANSSWGGSPPPEEGSLAVITKGQIILLDQSTPILKMLLIQGGTLIFDEANIELQAENILITDGGVLQIGTEASPFQHRAVITLHGHLRSPELPVYGAKTLGVREGTLDLHGLPIPVVWTRLTHTANAGEWTLTVQEAVTWKAGDNIVIASTGHRHSQAENEKRTIASVSADGMHITLTKPLNYTHLGITTTLPDGTVFEARAEVGILTRNILIRGSDNVEWNDKIPSCPDGFDTGEFATQTCLQGKFGEEMGSDQFGGCIMLHAPLPGADMVTGRIEYVEVFHAGQSFRLGRYPIHWHLLGDLQFKSYVKGCAIHQSYNRAITIHNTHHLLVERNIIYDIKGGAFFIEDGIEHGNILQYNLAVFVQQSTSLLNDDVTPAAFWVTNPNNTIRHNAAAGGTHFGFWYRMNDHPDGPSFDRNICQKRIPLGEFFNNTVHSQGWFGLWIFEEYFPMQTGSCTSTVPVPAIFNSLTVWNCQKGAEWVNGGALQFHNFVMVNNNEAGIETKRILAPYVGGWGESNGAVIKNAKIVGHLDELGMGPTFCTSKGLVLPFSQGLTVSSVHFMNFDRHACVALGVTSITGVCNDRCGGWSAKFVGIRYFHAPNKGGFRWEHEAVLIDVDGSLTGHRGHTVVPHSSLLDPSHCTQEPAWSIGFPGSICDASVSFHRLAFNKPSPVSLLEKDVVLSDSFGTSIVPFQKKRLTHMSGWMALIPNANHINWYFKGVEHLTNISYTSTFYGFKEEDYVIISHNFTQNPDMFNVVDMRNGSANPLNWNSSKNGDWHLEANTSTLYYLVSGRSDLPQSQPISGTLDPGVKDVIINFQAYCCVLQDCFPVHPPSRKPIPRKRPAAYNLWSNESFWQSSPENNYTVPRPGANVIIPEGTWIVADVDIPPVERLIIWGVLEMEDKSEIGVAGPTYRRVVLNATYISVQGGRLIGGWEDNPFKGELQIVLRGNHSTPEWAFPDGPNQGAKVLGVFGELDLHGLPHSVYKTKLLETAEAGSKILSLVDAVDWQEGEDVVITTTSYDLHQTEIRRIAKILHGHKILILNDSLSYTHLAERQWISGTAQSYTLSADVGILSRNIKIVGDDYSVLSKDSFGARILVGSFTGNMMTFKGNARISNVEFHHSGQEGYRDSTDPRYAVTFLNLGQIQDHGLSYVRGCAFHHVFSPAIGVFGTDGVDIDDNIIYFTVGEGIRIWGDANRVRGNLVTLSVWPGTYQNRKDLSSTLWHAAIEINRGTNTVLQNNVVAGFGRVGYRIDGEPCSSQANSMENWFNNEAHGGLYGIYMNQDGLPGCSLIQGFTIWTCWDYGIYFQTTESVHIYNVTLVNNGMSIFSMVYMPPSVSHKISSKTVKIKNSLIVGSSPEFNCSDVLTNDSPDVELTSAHRSSRPPSGGRSGICWPTFASAHNMAPRKPHAGIMSYNAISGLLHVSDSTFVGFKDVCSGETNVIFITNPLNEDLQHPIHVKNVQLIDTIEQSKVFIHRPDISKVNPSDCVDMVCDAKRKSFLRDLDGSFLGNSGSVIPQAEYEWDGNSQLGIGDYRIPKAMLTYLNGSRIPVTEKAPHKGIIRDATCKYIPEWQSYQCSGMEYAMMVLESLDSDTETRRLSPVAIMSNGYVDLINGPQDHGWCAGYTCQRRLSLFHGIVALNKKYEVYFTGTSPQNLRLMLLNVEHNKAVLVGIFFSTLQRLDVYVNNSLVCPKNTAWNAQKKHCELERHLSTEQFLPNLGSTVPGENYFDRTYQMLYLFLKGTTPVEVHTATVIFVSFHLPVMTADEFFSSHNLVRNLALFLKIPSDKIRVSRIIGASLRKKRSTGHIMEFEIGAAPTQFLSNSTTGQMQLSELQEITDSLGQAVVLGKISTILGFNISSMSITSPIPQPTDSGWIKVTAQPVERSAFPVHYLALVSSLSVVAQPVAAQPGQPFPQQPSVKAVDPEGNCVSVGITSLTLKAILKDSNNNQVGGLSGNTTIPFSTCWANYTDLTPHRTGKNYKIEFVLDNTVRVDSRPFSLSAQSVPGGSGSSPGSGSSSSGHSKASSVGTPVQTLAVITACLVGRLLLLEVFMAAVFILNTTVGIN.

The first 20 residues, 1–20, serve as a signal peptide directing secretion; sequence MGHLWLSGTWFLFGLLWCAA. The Extracellular portion of the chain corresponds to 21 to 4222; that stretch reads DSHKGSSETI…TPVQTLAVIT (4202 aa). IPT/TIG domains are found at residues 31-132, 146-255, 270-361, 1067-1153, 1155-1234, 1240-1323, 1329-1468, 1565-1648, 1658-1742, 1748-1827, 1830-1909, 1915-1996, 1998-2084, and 2090-2175; these read PKVT…GVAS, PTIR…KMTY, PEVV…ILEY, PLIL…HFIY, SQIS…SFSY, PVVT…KLNA, LEVI…SFSY, PSII…TLTK, PNID…SFSY, PYVT…NLTI, PAVA…SFTY, PFLK…AFEY, LSIQ…LFTY, and PLIT…DFLY. Positions 337–492 constitute a PA14 domain; that stretch reads PGGRGLKVEV…NVFTEQQTGD (156 aa). Thr-1297 and Thr-1359 each carry an O-linked (GalNAc...) threonine glycan. Thr-1838 is a glycosylation site (O-linked (GalNAc...) threonine). A G8 1 domain is found at 2183–2303; that stretch reads SSWGGSPPPE…IPVVWTRLTH (121 aa). PbH1 repeat units follow at residues 2484–2506, 2507–2529, 2565–2587, 2664–2686, and 2732–2755; these read QFKS…TIHN, THHL…FIED, NPNN…WYRM, GGAL…ETKR, and SQGL…ALGV. A G8 2 domain is found at 3035–3173; the sequence is SFWQSSPENN…HSVYKTKLLE (139 aa). PbH1 repeat units lie at residues 3292-3314, 3354-3376, 3415-3437, 3470-3492, and 3493-3514; these read KGNA…RDST, TDGV…RIWG, GTNT…RIDG, PGCS…YFQT, and TESV…FSMV. O-linked (GalNAc...) threonine glycosylation is present at Thr-3735. Residues 4183 to 4208 form a disordered region; that stretch reads LSAQSVPGGSGSSPGSGSSSSGHSKA. Positions 4197 to 4208 are enriched in low complexity; it reads GSGSSSSGHSKA. A helical membrane pass occupies residues 4223–4243; it reads ACLVGRLLLLEVFMAAVFILN. The Cytoplasmic segment spans residues 4244 to 4249; sequence TTVGIN.

As to expression, expressed in neurons in the hippocampus and the cerebral cortex (at protein level). Transiently expressed at high levels in inner ear hair cells, predominantly in outer hair cells, during early postnatal development (at protein level).

It localises to the membrane. It is found in the cell projection. The protein resides in the stereocilium membrane. Functionally, component of hair-cell stereocilia coat. Required for normal hearing. The protein is Fibrocystin-L (Pkhd1l1) of Mus musculus (Mouse).